We begin with the raw amino-acid sequence, 113 residues long: MAGFGLPNFGQLTEAFKKAQEIQQNAQALQDELDGMEIEGKSSDGRASVWLSGNQQPLRVRLDPALLQEGQQASETATLEALQAAYEQSTATMKGRMEELTGGLNLNLPGMGG.

The protein belongs to the YbaB/EbfC family. In terms of assembly, homodimer.

Its subcellular location is the cytoplasm. It localises to the nucleoid. Its function is as follows. Binds to DNA and alters its conformation. May be involved in regulation of gene expression, nucleoid organization and DNA protection. The polypeptide is Nucleoid-associated protein Syncc9605_0027 (Synechococcus sp. (strain CC9605)).